The chain runs to 510 residues: Histidine ammonia-lyase (510 aa).

The segment at residues 143–145 (ASG) is a cross-link (5-imidazolinone (Ala-Gly)). 2,3-didehydroalanine (Ser) is present on Ser144.

It belongs to the PAL/histidase family. In terms of processing, contains an active site 4-methylidene-imidazol-5-one (MIO), which is formed autocatalytically by cyclization and dehydration of residues Ala-Ser-Gly.

It is found in the cytoplasm. It catalyses the reaction L-histidine = trans-urocanate + NH4(+). It functions in the pathway amino-acid degradation; L-histidine degradation into L-glutamate; N-formimidoyl-L-glutamate from L-histidine: step 1/3. In Pseudomonas putida (strain ATCC 47054 / DSM 6125 / CFBP 8728 / NCIMB 11950 / KT2440), this protein is Histidine ammonia-lyase.